Reading from the N-terminus, the 570-residue chain is Serine/threonine-protein kinase flr-4 (570 aa).

One can recognise a Protein kinase domain in the interval 40 to 331; it reads YKYIQDLGKG…KLRIQIKKIL (292 aa). ATP-binding positions include 46-54 and lysine 67; that span reads LGKGRFGTV. Aspartate 172 acts as the Proton acceptor in catalysis. The disordered stretch occupies residues 338-369; sequence EEETDISHPISNSNTDSSTAISHNHSNDRKVG. The segment covering 346 to 361 has biased composition (polar residues); that stretch reads PISNSNTDSSTAISHN. Transmembrane regions (helical) follow at residues 400–420, 425–445, and 471–491; these read IMQI…FLNI, ICYL…FLLI, and LIIS…CCMV. Residues 550–570 form a disordered region; sequence VRRNHDDYYYDESSGPANEEN.

This sequence belongs to the protein kinase superfamily. Ser/Thr protein kinase family. In terms of tissue distribution, present in the intestinal cells from comma-stage embryos through the adult stage, although the intestinal expression is weaker after the L1 stage. Accumulates at the cell membrane of intestinal cells, especially the lateral membrane intervening the intestinal cells. Also detected in the muscles of the pharyngeal isthmus from the 3-fold embryonic stage, and in a pair of head neurons, which correspond to the AUA neurons, from the late L1 stage (at protein level).

It is found in the membrane. It carries out the reaction L-seryl-[protein] + ATP = O-phospho-L-seryl-[protein] + ADP + H(+). The enzyme catalyses L-threonyl-[protein] + ATP = O-phospho-L-threonyl-[protein] + ADP + H(+). In terms of biological role, probable serine-threonine protein kinase involved in the control of defecation rhythms. Required to increase the length of defecation cycle period. Acts in a cell-functional rather than developmental aspect in the regulation of defecation rhythms. Prevents preferential activation of the p38 MAPK pathway in response to the levels of vitamin B12 in different food types during larval development, thereby regulating the expression of cytoprotective genes, modulating life span and stress tolerance. This Caenorhabditis elegans protein is Serine/threonine-protein kinase flr-4 (flr-4).